The sequence spans 318 residues: uncharacterized protein (318 aa).

4 helical membrane-spanning segments follow: residues 112-132 (VIGV…PVFL), 147-167 (IAIE…FLSM), 209-229 (CGSS…LLVP), and 237-257 (VIDR…VLQL).

It localises to the cell membrane. This is an uncharacterized protein from Bacillus subtilis (strain 168).